Consider the following 255-residue polypeptide: MRILLTNDDGIHAEGLAVLERIARKLSDDVWVVAPETDQSGLAHSLTLSEPLRLRQIDARHFALRGTPTDCVIMGVRHVLPGAPDLVLSGVNSGANMADDVTYSGTVAGAMEGTLLGVRAIALSQEYEYAGDRRIVPWETAEAHAPELIGRLMEAGWPEGVLLNLNFPNCAPEEVKGVRVTAQGKLSHDARLDERRDGRGFPYFWLHFGRGKAPVADDSDIAAIRSGCISVTPLHLDLTAHKVRAELGAALGVEA.

Residues D8, D9, S40, and N92 each coordinate a divalent metal cation.

Belongs to the SurE nucleotidase family. It depends on a divalent metal cation as a cofactor.

It localises to the cytoplasm. It catalyses the reaction a ribonucleoside 5'-phosphate + H2O = a ribonucleoside + phosphate. In terms of biological role, nucleotidase that shows phosphatase activity on nucleoside 5'-monophosphates. This is 5'-nucleotidase SurE from Brucella canis (strain ATCC 23365 / NCTC 10854 / RM-666).